Consider the following 530-residue polypeptide: 26S proteasome non-ATPase regulatory subunit 3 (530 aa).

The segment covering 1–16 (MKQEGSARRRGADKAK) has biased composition (basic and acidic residues). The segment at 1–65 (MKQEGSARRR…TEHSQRELDT (65 aa)) is disordered. A compositionally biased stretch (pro residues) spans 17–30 (PPPGGEQEPPPPAP). K36 is covalently cross-linked (Glycyl lysine isopeptide (Lys-Gly) (interchain with G-Cter in SUMO1); alternate). K36 is covalently cross-linked (Glycyl lysine isopeptide (Lys-Gly) (interchain with G-Cter in SUMO2); alternate). In terms of domain architecture, PCI spans 282–461 (ARYLYYTGRI…GYVQSKEMID (180 aa)). Phosphoserine occurs at positions 414 and 426. The interval 496–530 (SYNKDLESAEERREREQQDLEFAKEMAEDDDDSFP) is disordered. The span at 497-521 (YNKDLESAEERREREQQDLEFAKEM) shows a compositional bias: basic and acidic residues.

The protein belongs to the proteasome subunit S3 family. In terms of assembly, component of the 19S proteasome regulatory particle complex. The 26S proteasome consists of a 20S core particle (CP) and two 19S regulatory subunits (RP). The regulatory particle is made of a lid composed of 9 subunits including PSMD3, a base containing 6 ATPases and few additional components. Interacts with UBQLN1 (via ubiquitin-like domain). Interacts with ERCC6.

In terms of biological role, component of the 26S proteasome, a multiprotein complex involved in the ATP-dependent degradation of ubiquitinated proteins. This complex plays a key role in the maintenance of protein homeostasis by removing misfolded or damaged proteins, which could impair cellular functions, and by removing proteins whose functions are no longer required. Therefore, the proteasome participates in numerous cellular processes, including cell cycle progression, apoptosis, or DNA damage repair. The chain is 26S proteasome non-ATPase regulatory subunit 3 (Psmd3) from Mus musculus (Mouse).